Consider the following 192-residue polypeptide: Xanthine phosphoribosyltransferase 2 (192 aa).

Xanthine-binding residues include leucine 20 and asparagine 27. Alanine 131–alanine 135 lines the 5-phospho-alpha-D-ribose 1-diphosphate pocket. Lysine 159 contributes to the xanthine binding site.

It belongs to the purine/pyrimidine phosphoribosyltransferase family. Xpt subfamily. In terms of assembly, homodimer.

The protein resides in the cytoplasm. The enzyme catalyses XMP + diphosphate = xanthine + 5-phospho-alpha-D-ribose 1-diphosphate. It functions in the pathway purine metabolism; XMP biosynthesis via salvage pathway; XMP from xanthine: step 1/1. Converts the preformed base xanthine, a product of nucleic acid breakdown, to xanthosine 5'-monophosphate (XMP), so it can be reused for RNA or DNA synthesis. The sequence is that of Xanthine phosphoribosyltransferase 2 from Clostridium perfringens (strain ATCC 13124 / DSM 756 / JCM 1290 / NCIMB 6125 / NCTC 8237 / Type A).